The following is a 176-amino-acid chain: Large ribosomal subunit protein uL15 (176 aa).

The span at 1–13 shows a compositional bias: basic and acidic residues; the sequence is MKLNDLRDNEGAR. Disordered regions lie at residues 1 to 48 and 151 to 176; these read MKLN…AIKG and IPAAQPEHEKKAARSEANKKAKAKAE. Gly residues predominate over residues 21–35; that stretch reads RGIGSGKGKTGGRGQ. The span at 156–176 shows a compositional bias: basic and acidic residues; that stretch reads PEHEKKAARSEANKKAKAKAE.

It belongs to the universal ribosomal protein uL15 family. As to quaternary structure, part of the 50S ribosomal subunit.

Functionally, binds to the 23S rRNA. This chain is Large ribosomal subunit protein uL15, found in Erythrobacter litoralis (strain HTCC2594).